The sequence spans 405 residues: Methylamine dehydrogenase heavy chain (405 aa).

Positions 1–36 are cleaved as a signal peptide; that stretch reads MTTFDHPSMIRQPKPTGLAGGLVLAALMLSSSLALA.

This sequence belongs to the aromatic amine dehydrogenase heavy chain family. In terms of assembly, tetramer of two light and two heavy chains.

The protein localises to the periplasm. The enzyme catalyses 2 oxidized [amicyanin] + methylamine + H2O = 2 reduced [amicyanin] + formaldehyde + NH4(+) + 2 H(+). Its function is as follows. Methylamine dehydrogenase carries out the oxidation of methylamine. Electrons are passed from methylamine dehydrogenase to amicyanin. The polypeptide is Methylamine dehydrogenase heavy chain (mauB) (Methylophilus methylotrophus (Bacterium W3A1)).